A 421-amino-acid polypeptide reads, in one-letter code: Fasciclin-like arabinogalactan protein ARB_02922 (421 aa).

Positions 1-17 (MLLYYILVALWATVTYA) are cleaved as a signal peptide. 2 consecutive FAS1 domains span residues 18–167 (KSFS…DRPL) and 169–296 (LPQS…SDVL). Asn52, Asn75, Asn80, Asn120, Asn145, Asn181, Asn223, and Asn300 each carry an N-linked (GlcNAc...) asparagine glycan. The interval 300–401 (NDTAKPVPNA…NTPQPGAAAT (102 aa)) is disordered. Gly residues-rich tracts occupy residues 344–356 (TSGGEGGGGGGGE) and 372–387 (SGGGGGGGGGAGGGPG). Low complexity predominate over residues 388–401 (PTATNTPQPGAAAT). Residue Gly397 is the site of GPI-anchor amidated glycine attachment. Residues 398–421 (AAATERAKAGLAAVVGLGVVLINA) constitute a propeptide, removed in mature form.

The protein belongs to the fasciclin-like AGP family.

The protein localises to the cell membrane. May be a cell surface adhesion protein. The protein is Fasciclin-like arabinogalactan protein ARB_02922 of Arthroderma benhamiae (strain ATCC MYA-4681 / CBS 112371) (Trichophyton mentagrophytes).